A 94-amino-acid chain; its full sequence is Bacterial microcompartment shell protein PduA (94 aa).

Residues 5–89 (ALGMVETKGL…PHTDVEKILP (85 aa)) form the BMC domain.

Belongs to the bacterial microcompartments protein family. Homohexamer with a central pore of about 5.6 Angstroms in diameter. The hexamers pack against each other in arrays. Interacts with the N-terminus of PduP which targets PduP to the BMC. Modeling suggests PduC, PduD, PduE, PduL and PduP interact with a cleft formed by the C-terminal segments of 2 adjacent PduA subunits (on the BMC luminal side) in the hexamer.

It is found in the bacterial microcompartment. Its pathway is polyol metabolism; 1,2-propanediol degradation. In terms of biological role, one of the major shell proteins of the bacterial microcompartment (BMC) dedicated to 1,2-propanediol (1,2-PD) degradation. At least one of PduA or PduJ is required for BMC assembly; it must be encoded as the first gene in the pdu operon. Not required for structural integrity of BMCs, it is required to mitigate propionaldehyde toxicity. Controls diffusion of 1,2-PD into and propionaldehyde out of the BMC shell; residue 40 is particularly important for pore permeability. Overexpression of this protein leads to aberrant filaments that extend the length of the cell, cross the cleavage furrow and impair division. The filaments form nanotubes with a hollow center. The isolated BMC shell component protein ratio for J:A:B':B:K:T:U is approximately 15:10:7:6:1:1:2. Edge residues (particularly Lys-26) are important for function and assembly of the BMC, and influence array formation by hexamers. Interaction with PduA allows encapsulation of at least PduP in BMCs. Probably also targets PduD to the BMC. PduA is probably the hub for binding multiple enzymes to the interior of the BMC; modeling suggests PduC, PduD, PduE, PduG, PduL and PduP are targeted to PduA. Functionally, the 1,2-PD-specific bacterial microcompartment (BMC) concentrates low levels of 1,2-PD catabolic enzymes, concentrates volatile reaction intermediates thus enhancing pathway flux and keeps the level of toxic, mutagenic propionaldehyde low. This Salmonella typhimurium (strain LT2 / SGSC1412 / ATCC 700720) protein is Bacterial microcompartment shell protein PduA.